The sequence spans 204 residues: DNA-directed RNA polymerase III subunit RPC8 (204 aa).

Residues 158 to 178 form a disordered region; that stretch reads VDTSPTGPSSAEAASSSEELP. Residues 166 to 175 are compositionally biased toward low complexity; sequence SSAEAASSSE.

The protein belongs to the eukaryotic RPB7/RPC8 RNA polymerase subunit family. In terms of assembly, component of the RNA polymerase III complex consisting of 17 subunits: a ten-subunit horseshoe-shaped catalytic core composed of POLR3A/RPC1, POLR3B/RPC2, POLR1C/RPAC1, POLR1D/RPAC2, POLR3K/RPC10, POLR2E/RPABC1, POLR2F/RPABC2, POLR2H/RPABC3, POLR2K/RPABC4 and POLR2L/RPABC5; a mobile stalk composed of two subunits POLR3H/RPC8 and CRCP/RPC9, protruding from the core and functioning primarily in transcription initiation; and additional subunits homologous to general transcription factors of the RNA polymerase II machinery, POLR3C/RPC3-POLR3F/RPC6-POLR3G/RPC7 heterotrimer required for transcription initiation and POLR3D/RPC4-POLR3E/RPC5 heterodimer involved in both transcription initiation and termination. Interacts with CRCP/RPC9. POLR3H/RPC8 and CRCP/RPC9 probably form a Pol III subcomplex.

The protein localises to the nucleus. Functionally, DNA-dependent RNA polymerase catalyzes the transcription of DNA into RNA using the four ribonucleoside triphosphates as substrates. Specific peripheric component of RNA polymerase III (Pol III) which synthesizes small non-coding RNAs including 5S rRNA, snRNAs, tRNAs and miRNAs from at least 500 distinct genomic loci. With CRCP/RPC9 forms a mobile stalk that protrudes from Pol III core and functions primarily in transcription initiation. Pol III plays a key role in sensing and limiting infection by intracellular bacteria and DNA viruses. Acts as nuclear and cytosolic DNA sensor involved in innate immune response. Can sense non-self dsDNA that serves as template for transcription into dsRNA. The non-self RNA polymerase III transcripts, such as Epstein-Barr virus-encoded RNAs (EBERs) induce type I interferon and NF-kappa-B through the RIG-I pathway. This Bos taurus (Bovine) protein is DNA-directed RNA polymerase III subunit RPC8 (POLR3H).